The primary structure comprises 160 residues: Putative lipoprotein YfiB (160 aa).

The first 18 residues, 1–18 (MIKHLVAPLVFTSLILTG), serve as a signal peptide directing secretion. C19 carries the N-palmitoyl cysteine lipid modification. A lipid anchor (S-diacylglycerol cysteine) is attached at C19. The OmpA-like domain occupies 43 to 160 (AGDWSLGLSD…RRVAVVITTP (118 aa)).

Belongs to the outer membrane OOP (TC 1.B.6) superfamily.

It localises to the cell membrane. The chain is Putative lipoprotein YfiB (yfiB) from Escherichia coli (strain K12).